We begin with the raw amino-acid sequence, 383 residues long: UDP-N-acetylglucosamine--N-acetylmuramyl-(pentapeptide) pyrophosphoryl-undecaprenol N-acetylglucosamine transferase (383 aa).

UDP-N-acetyl-alpha-D-glucosamine-binding positions include 10 to 12, Asn124, Arg165, Ser190, Ile245, and Gln290; that span reads TGG. Residues 364-383 form a disordered region; that stretch reads PFGQAREPGQKPARPPDLAS.

Belongs to the glycosyltransferase 28 family. MurG subfamily.

Its subcellular location is the cell inner membrane. The catalysed reaction is di-trans,octa-cis-undecaprenyl diphospho-N-acetyl-alpha-D-muramoyl-L-alanyl-D-glutamyl-meso-2,6-diaminopimeloyl-D-alanyl-D-alanine + UDP-N-acetyl-alpha-D-glucosamine = di-trans,octa-cis-undecaprenyl diphospho-[N-acetyl-alpha-D-glucosaminyl-(1-&gt;4)]-N-acetyl-alpha-D-muramoyl-L-alanyl-D-glutamyl-meso-2,6-diaminopimeloyl-D-alanyl-D-alanine + UDP + H(+). It participates in cell wall biogenesis; peptidoglycan biosynthesis. In terms of biological role, cell wall formation. Catalyzes the transfer of a GlcNAc subunit on undecaprenyl-pyrophosphoryl-MurNAc-pentapeptide (lipid intermediate I) to form undecaprenyl-pyrophosphoryl-MurNAc-(pentapeptide)GlcNAc (lipid intermediate II). This Anaeromyxobacter sp. (strain K) protein is UDP-N-acetylglucosamine--N-acetylmuramyl-(pentapeptide) pyrophosphoryl-undecaprenol N-acetylglucosamine transferase.